A 144-amino-acid polypeptide reads, in one-letter code: Globin-1 (144 aa).

One can recognise a Globin domain in the interval 1–141 (VSANDIKNVQ…ILHQMSSYFA (141 aa)). His89 serves as a coordination point for heme b.

The protein belongs to the globin family. In terms of assembly, homodimer.

This chain is Globin-1, found in Phreagena soyoae (Deep-sea cold-seep clam).